A 155-amino-acid chain; its full sequence is Ribosomal RNA large subunit methyltransferase H (155 aa).

Residues Leu-72, Gly-103, and 122–127 (FGRMVW) each bind S-adenosyl-L-methionine.

It belongs to the RNA methyltransferase RlmH family. As to quaternary structure, homodimer.

It localises to the cytoplasm. It catalyses the reaction pseudouridine(1915) in 23S rRNA + S-adenosyl-L-methionine = N(3)-methylpseudouridine(1915) in 23S rRNA + S-adenosyl-L-homocysteine + H(+). In terms of biological role, specifically methylates the pseudouridine at position 1915 (m3Psi1915) in 23S rRNA. In Cereibacter sphaeroides (strain ATCC 17023 / DSM 158 / JCM 6121 / CCUG 31486 / LMG 2827 / NBRC 12203 / NCIMB 8253 / ATH 2.4.1.) (Rhodobacter sphaeroides), this protein is Ribosomal RNA large subunit methyltransferase H.